The following is a 682-amino-acid chain: Penicillin-binding protein activator LpoA (682 aa).

Positions 1–26 are cleaved as a signal peptide; that stretch reads MLPLNSVRTHAGRLVPVMLAALFLAG. The N-palmitoyl cysteine moiety is linked to residue cysteine 27. Cysteine 27 carries the S-diacylglycerol cysteine lipid modification. 2 disordered regions span residues 240–262 and 314–341; these read AKQLPSQLGGTPPAAAAPTTGET and ANNAAAATPGAPAVPSPASSTPSAVSPT. Residues 248–262 show a composition bias toward low complexity; sequence GGTPPAAAAPTTGET.

The protein belongs to the LpoA family. As to quaternary structure, interacts with PBP1a.

The protein resides in the cell outer membrane. In terms of biological role, regulator of peptidoglycan synthesis that is essential for the function of penicillin-binding protein 1A (PBP1a). In Dickeya chrysanthemi (strain Ech1591) (Dickeya zeae (strain Ech1591)), this protein is Penicillin-binding protein activator LpoA.